Here is a 135-residue protein sequence, read N- to C-terminus: ATP synthase epsilon chain (135 aa).

The protein belongs to the ATPase epsilon chain family. F-type ATPases have 2 components, CF(1) - the catalytic core - and CF(0) - the membrane proton channel. CF(1) has five subunits: alpha(3), beta(3), gamma(1), delta(1), epsilon(1). CF(0) has three main subunits: a, b and c.

The protein resides in the cell inner membrane. In terms of biological role, produces ATP from ADP in the presence of a proton gradient across the membrane. This is ATP synthase epsilon chain from Brucella suis (strain ATCC 23445 / NCTC 10510).